We begin with the raw amino-acid sequence, 117 residues long: Large ribosomal subunit protein uL22 (117 aa).

The protein belongs to the universal ribosomal protein uL22 family. Part of the 50S ribosomal subunit.

This protein binds specifically to 23S rRNA; its binding is stimulated by other ribosomal proteins, e.g. L4, L17, and L20. It is important during the early stages of 50S assembly. It makes multiple contacts with different domains of the 23S rRNA in the assembled 50S subunit and ribosome. Functionally, the globular domain of the protein is located near the polypeptide exit tunnel on the outside of the subunit, while an extended beta-hairpin is found that lines the wall of the exit tunnel in the center of the 70S ribosome. The chain is Large ribosomal subunit protein uL22 from Lactobacillus helveticus (strain DPC 4571).